Consider the following 516-residue polypeptide: MSTSAMELLLTATIFCLVLWVVRIFRPQVPKGLKSPPGPWGWPLIGHMLTLGKNPHLALTRLSARYGDVLQIRIGSTPVVVLSGLDTIRQALVRQGDDFKGRPDLYSFTFISDGQSMTFNPDSGPVWAARRRLAQSALKSFSVASDPASVSSCYLEEHVKKEAEYLIKKFQELMAGPGHFDPYRYVVVSVANVISAICFGQRYSHDDQQLLELIDLNNEFGEVTGSGNPSDFIPILRYLPSATMDTFKDLNRRFSVFIQKMIKEHYKTFEKGHIRDITDSLIEHCQDRKLDKNANIQISDQKIIGIVLDLFGAGFDTITTAISWSLLYLVMNPRIQKKIQEELDTVIGRERQPQLADRPKLPYMEAFISEVFRYSSFMPFTIPHSTTKDTSLNGFYIPKGCCIFVNQWQINHDQKLWGDPSVFRPERFLSPDGTVDKALSEKVTIFGLGKRRCLGEVIGRWEVFLFLAILLQQLEFSTSPGVKIDMTPIYGLTMKYSRCEHFQAQTRPFVLKCPEA.

Positions 25 to 36 (FRPQVPKGLKSP) are mitochondrial targeting signal. The O-linked (GlcNAc) serine glycan is linked to Ser-63. Phe-220 is a binding site for substrate. Cys-453 serves as a coordination point for heme.

This sequence belongs to the cytochrome P450 family. In terms of assembly, interacts with cytosolic chaperones HSP70 and HSP90; this interaction is required for initial targeting to mitochondria. Interacts (via mitochondrial targeting signal) with TOMM40 (via N-terminus); this interaction is required for translocation across the mitochondrial outer membrane. The cofactor is heme. As to expression, constitutively expressed in liver.

The protein resides in the endoplasmic reticulum membrane. The protein localises to the mitochondrion inner membrane. It is found in the microsome membrane. Its subcellular location is the cytoplasm. The enzyme catalyses an organic molecule + reduced [NADPH--hemoprotein reductase] + O2 = an alcohol + oxidized [NADPH--hemoprotein reductase] + H2O + H(+). It catalyses the reaction estrone + reduced [NADPH--hemoprotein reductase] + O2 = 2-hydroxyestrone + oxidized [NADPH--hemoprotein reductase] + H2O + H(+). It carries out the reaction estrone + reduced [NADPH--hemoprotein reductase] + O2 = 4-hydroxyestrone + oxidized [NADPH--hemoprotein reductase] + H2O + H(+). The catalysed reaction is estrone + reduced [NADPH--hemoprotein reductase] + O2 = 6alpha-hydroxyestrone + oxidized [NADPH--hemoprotein reductase] + H2O + H(+). The enzyme catalyses estrone + reduced [NADPH--hemoprotein reductase] + O2 = 15alpha-hydroxyestrone + oxidized [NADPH--hemoprotein reductase] + H2O + H(+). It catalyses the reaction estrone + reduced [NADPH--hemoprotein reductase] + O2 = 16alpha-hydroxyestrone + oxidized [NADPH--hemoprotein reductase] + H2O + H(+). It carries out the reaction 17beta-estradiol + reduced [NADPH--hemoprotein reductase] + O2 = 2-hydroxy-17beta-estradiol + oxidized [NADPH--hemoprotein reductase] + H2O + H(+). The catalysed reaction is 17beta-estradiol + reduced [NADPH--hemoprotein reductase] + O2 = 4-hydroxy-17beta-estradiol + oxidized [NADPH--hemoprotein reductase] + H2O + H(+). The enzyme catalyses 17beta-estradiol + reduced [NADPH--hemoprotein reductase] + O2 = 6alpha-hydroxy-17beta-estradiol + oxidized [NADPH--hemoprotein reductase] + H2O + H(+). It catalyses the reaction 17beta-estradiol + reduced [NADPH--hemoprotein reductase] + O2 = 7alpha-hydroxy-17beta-estradiol + oxidized [NADPH--hemoprotein reductase] + H2O + H(+). It carries out the reaction 17beta-estradiol + reduced [NADPH--hemoprotein reductase] + O2 = 15alpha-hydroxy-17beta-estradiol + oxidized [NADPH--hemoprotein reductase] + H2O + H(+). The catalysed reaction is (5Z,8Z,11Z)-eicosatrienoate + reduced [NADPH--hemoprotein reductase] + O2 = 19-hydroxy-(5Z,8Z,11Z)-eicosatrienoate + oxidized [NADPH--hemoprotein reductase] + H2O + H(+). The enzyme catalyses (5Z,8Z,11Z,14Z)-eicosatetraenoate + reduced [NADPH--hemoprotein reductase] + O2 = 16-hydroxy-(5Z,8Z,11Z,14Z)-eicosatetraenoate + oxidized [NADPH--hemoprotein reductase] + H2O + H(+). It catalyses the reaction (5Z,8Z,11Z,14Z)-eicosatetraenoate + reduced [NADPH--hemoprotein reductase] + O2 = 17-hydroxy-(5Z,8Z,11Z,14Z)-eicosatetraenoate + oxidized [NADPH--hemoprotein reductase] + H2O + H(+). It carries out the reaction (5Z,8Z,11Z,14Z)-eicosatetraenoate + reduced [NADPH--hemoprotein reductase] + O2 = 18-hydroxy-(5Z,8Z,11Z,14Z)-eicosatetraenoate + oxidized [NADPH--hemoprotein reductase] + H2O + H(+). The catalysed reaction is (5Z,8Z,11Z,14Z)-eicosatetraenoate + reduced [NADPH--hemoprotein reductase] + O2 = 19-hydroxy-(5Z,8Z,11Z,14Z)-eicosatetraenoate + oxidized [NADPH--hemoprotein reductase] + H2O + H(+). The enzyme catalyses (5Z,8Z,11Z,14Z,17Z)-eicosapentaenoate + reduced [NADPH--hemoprotein reductase] + O2 = 19-hydroxy-(5Z,8Z,11Z,14Z,17Z)-eicosapentaenoate + oxidized [NADPH--hemoprotein reductase] + H2O + H(+). It catalyses the reaction (5Z,8Z,11Z,14Z)-eicosatetraenoate + reduced [NADPH--hemoprotein reductase] + O2 = (8R,9S)-epoxy-(5Z,11Z,14Z)-eicosatrienoate + oxidized [NADPH--hemoprotein reductase] + H2O + H(+). It carries out the reaction (5Z,8Z,11Z,14Z)-eicosatetraenoate + reduced [NADPH--hemoprotein reductase] + O2 = (11R,12S)-epoxy-(5Z,8Z,14Z)-eicosatrienoate + oxidized [NADPH--hemoprotein reductase] + H2O + H(+). The catalysed reaction is (5Z,8Z,11Z,14Z)-eicosatetraenoate + reduced [NADPH--hemoprotein reductase] + O2 = (14S,15R)-epoxy-(5Z,8Z,11Z)-eicosatrienoate + oxidized [NADPH--hemoprotein reductase] + H2O + H(+). The enzyme catalyses (5Z,8Z,11Z,14Z)-eicosatetraenoate + reduced [NADPH--hemoprotein reductase] + O2 = (14R,15S)-epoxy-(5Z,8Z,11Z)-eicosatrienoate + oxidized [NADPH--hemoprotein reductase] + H2O + H(+). It catalyses the reaction (5Z,8Z,11Z,14Z,17Z)-eicosapentaenoate + reduced [NADPH--hemoprotein reductase] + O2 = (17R,18S)-epoxy-(5Z,8Z,11Z,14Z)-eicosatetraenoate + oxidized [NADPH--hemoprotein reductase] + H2O + H(+). It carries out the reaction (4Z,7Z,10Z,13Z,16Z,19Z)-docosahexaenoate + reduced [NADPH--hemoprotein reductase] + O2 = (19S,20R)-epoxy-(4Z,7Z,10Z,13Z,16Z)-docosapentaenoate + oxidized [NADPH--hemoprotein reductase] + H2O + H(+). The catalysed reaction is (4Z,7Z,10Z,13Z,16Z,19Z)-docosahexaenoate + reduced [NADPH--hemoprotein reductase] + O2 = (19R,20S)-epoxy-(4Z,7Z,10Z,13Z,16Z)-docosapentaenoate + oxidized [NADPH--hemoprotein reductase] + H2O + H(+). The enzyme catalyses all-trans-retinol + reduced [NADPH--hemoprotein reductase] + O2 = all-trans-retinal + oxidized [NADPH--hemoprotein reductase] + 2 H2O + H(+). It catalyses the reaction all-trans-retinal + reduced [NADPH--hemoprotein reductase] + O2 = all-trans-retinoate + oxidized [NADPH--hemoprotein reductase] + H2O + 2 H(+). It carries out the reaction (13S)-hydroperoxy-(9Z,11E)-octadecadienoate = 13-oxo-(9Z,11E)-octadecadienoate + H2O. The catalysed reaction is (12S)-hydroperoxy-(5Z,8Z,10E,14Z)-eicosatetraenoate = 12-oxo-(5Z,8Z,10E,14Z)-eicosatetraenoate + H2O. The enzyme catalyses (15S)-hydroperoxy-(5Z,8Z,11Z,13E)-eicosatetraenoate = 15-oxo-(5Z,8Z,11Z,13E)-eicosatetraenoate + H2O. It catalyses the reaction (5S)-hydroperoxy-(6E,8Z,11Z,14Z)-eicosatetraenoate = 5-oxo-(6E,8Z,11Z,14Z)-eicosatetraenoate + H2O. It participates in steroid hormone biosynthesis. It functions in the pathway lipid metabolism; fatty acid metabolism. Its pathway is cofactor metabolism; retinol metabolism. Functionally, a cytochrome P450 monooxygenase involved in the metabolism of various endogenous substrates, including fatty acids, steroid hormones and vitamins. Mechanistically, uses molecular oxygen inserting one oxygen atom into a substrate, and reducing the second into a water molecule, with two electrons provided by NADPH via cytochrome P450 reductase (CPR; NADPH-ferrihemoprotein reductase). Catalyzes the hydroxylation of carbon-hydrogen bonds. Exhibits high catalytic activity for the formation of hydroxyestrogens from estrone (E1) and 17beta-estradiol (E2), namely 2-hydroxy E1 and E2, as well as D-ring hydroxylated E1 and E2 at the C15alpha and C16alpha positions. Displays different regioselectivities for polyunsaturated fatty acids (PUFA) hydroxylation. Catalyzes the epoxidation of double bonds of certain PUFA. Converts arachidonic acid toward epoxyeicosatrienoic acid (EET) regioisomers, 8,9-, 11,12-, and 14,15-EET, that function as lipid mediators in the vascular system. Displays an absolute stereoselectivity in the epoxidation of eicosapentaenoic acid (EPA) producing the 17(R),18(S) enantiomer. May play an important role in all-trans retinoic acid biosynthesis in extrahepatic tissues. Catalyzes two successive oxidative transformation of all-trans retinol to all-trans retinal and then to the active form all-trans retinoic acid. May also participate in eicosanoids metabolism by converting hydroperoxide species into oxo metabolites (lipoxygenase-like reaction, NADPH-independent). The polypeptide is Cytochrome P450 1A1 (CYP1A1) (Cavia porcellus (Guinea pig)).